Consider the following 453-residue polypeptide: Glutamyl-tRNA reductase (453 aa).

Substrate-binding positions include 49-52 (TCNR), serine 109, 114-116 (EQQ), and glutamine 120. The active-site Nucleophile is the cysteine 50. Residue 191-196 (GAGSMG) coordinates NADP(+). The interval 432–453 (PAAVATPTDLVDGDRTGRDLQA) is disordered. The span at 443-453 (DGDRTGRDLQA) shows a compositional bias: basic and acidic residues.

This sequence belongs to the glutamyl-tRNA reductase family. Homodimer.

It carries out the reaction (S)-4-amino-5-oxopentanoate + tRNA(Glu) + NADP(+) = L-glutamyl-tRNA(Glu) + NADPH + H(+). Its pathway is porphyrin-containing compound metabolism; protoporphyrin-IX biosynthesis; 5-aminolevulinate from L-glutamyl-tRNA(Glu): step 1/2. In terms of biological role, catalyzes the NADPH-dependent reduction of glutamyl-tRNA(Glu) to glutamate 1-semialdehyde (GSA). This is Glutamyl-tRNA reductase from Rhodococcus erythropolis (strain PR4 / NBRC 100887).